Consider the following 307-residue polypeptide: Aspartate carbamoyltransferase catalytic subunit (307 aa).

Positions 54 and 55 each coordinate carbamoyl phosphate. Residue K83 participates in L-aspartate binding. Carbamoyl phosphate-binding residues include R104, H132, and Q135. L-aspartate-binding residues include R165 and R228. 2 residues coordinate carbamoyl phosphate: L267 and P268.

Belongs to the aspartate/ornithine carbamoyltransferase superfamily. ATCase family. In terms of assembly, heterododecamer (2C3:3R2) of six catalytic PyrB chains organized as two trimers (C3), and six regulatory PyrI chains organized as three dimers (R2).

It carries out the reaction carbamoyl phosphate + L-aspartate = N-carbamoyl-L-aspartate + phosphate + H(+). Its pathway is pyrimidine metabolism; UMP biosynthesis via de novo pathway; (S)-dihydroorotate from bicarbonate: step 2/3. Its function is as follows. Catalyzes the condensation of carbamoyl phosphate and aspartate to form carbamoyl aspartate and inorganic phosphate, the committed step in the de novo pyrimidine nucleotide biosynthesis pathway. The protein is Aspartate carbamoyltransferase catalytic subunit of Clostridium botulinum (strain Langeland / NCTC 10281 / Type F).